The following is a 279-amino-acid chain: MPYPRKRFGQHWLKDPAVHEAIVRAAQLPPPQRDPAWVLEIGPGTGQLTQRLLAQGVHVVAVEIDRDLCRLLQKRFADQPRFHLVEGDFLRLPLPPQPRLLVANIPYNLTGPILEKVLGSPAQPVRQFERIVLMVQKELAERLQAGPGSKAYGALSVRVRYLAECELICRVPPSAFRPPPQVESAVVRLTPRPAPTPARDPRWFSQLVCQGFSARRKQLVNALGGLVDRQTVAAALAQLRLSPTARAEELDLPDWLALSDLLLEQTPRMAAVSGEGKPR.

Positions 11, 13, 42, 63, 88, and 104 each coordinate S-adenosyl-L-methionine.

Belongs to the class I-like SAM-binding methyltransferase superfamily. rRNA adenine N(6)-methyltransferase family. RsmA subfamily.

It is found in the cytoplasm. The enzyme catalyses adenosine(1518)/adenosine(1519) in 16S rRNA + 4 S-adenosyl-L-methionine = N(6)-dimethyladenosine(1518)/N(6)-dimethyladenosine(1519) in 16S rRNA + 4 S-adenosyl-L-homocysteine + 4 H(+). Its function is as follows. Specifically dimethylates two adjacent adenosines (A1518 and A1519) in the loop of a conserved hairpin near the 3'-end of 16S rRNA in the 30S particle. May play a critical role in biogenesis of 30S subunits. This chain is Ribosomal RNA small subunit methyltransferase A, found in Synechococcus sp. (strain JA-3-3Ab) (Cyanobacteria bacterium Yellowstone A-Prime).